Reading from the N-terminus, the 166-residue chain is Endoribonuclease YbeY (166 aa).

Zn(2+) contacts are provided by histidine 111, histidine 115, and histidine 121. The segment at 141–166 is disordered; it reads LGYPDPYAEDESADHPHSDTPSKDHE. Basic and acidic residues predominate over residues 153-166; the sequence is ADHPHSDTPSKDHE.

This sequence belongs to the endoribonuclease YbeY family. Zn(2+) is required as a cofactor.

It localises to the cytoplasm. Single strand-specific metallo-endoribonuclease involved in late-stage 70S ribosome quality control and in maturation of the 3' terminus of the 16S rRNA. The chain is Endoribonuclease YbeY from Pseudomonas savastanoi pv. phaseolicola (strain 1448A / Race 6) (Pseudomonas syringae pv. phaseolicola (strain 1448A / Race 6)).